The primary structure comprises 160 residues: Transcriptional repressor NrdR (160 aa).

A zinc finger spans residues 3–34; that stretch reads CPFCGAEDTSVVDSRVSEEGSRIRRRRQCTAC. The ATP-cone domain maps to 49-139; that stretch reads PQIIKQGGNR…VYRSFEDVGD (91 aa).

Belongs to the NrdR family. Requires Zn(2+) as cofactor.

Negatively regulates transcription of bacterial ribonucleotide reductase nrd genes and operons by binding to NrdR-boxes. This chain is Transcriptional repressor NrdR, found in Nitrosomonas eutropha (strain DSM 101675 / C91 / Nm57).